Reading from the N-terminus, the 255-residue chain is Triosephosphate isomerase (255 aa).

9–11 (NWK) is a binding site for substrate. H95 functions as the Electrophile in the catalytic mechanism. E167 functions as the Proton acceptor in the catalytic mechanism. Residues G173, S212, and 233–234 (GG) each bind substrate.

This sequence belongs to the triosephosphate isomerase family. Homodimer.

It localises to the cytoplasm. It carries out the reaction D-glyceraldehyde 3-phosphate = dihydroxyacetone phosphate. The protein operates within carbohydrate biosynthesis; gluconeogenesis. Its pathway is carbohydrate degradation; glycolysis; D-glyceraldehyde 3-phosphate from glycerone phosphate: step 1/1. In terms of biological role, involved in the gluconeogenesis. Catalyzes stereospecifically the conversion of dihydroxyacetone phosphate (DHAP) to D-glyceraldehyde-3-phosphate (G3P). The chain is Triosephosphate isomerase from Salmonella agona (strain SL483).